Consider the following 181-residue polypeptide: NADH-quinone oxidoreductase subunit B (181 aa).

[4Fe-4S] cluster contacts are provided by Cys-60, Cys-61, Cys-125, and Cys-155.

Belongs to the complex I 20 kDa subunit family. In terms of assembly, NDH-1 is composed of 14 different subunits. Subunits NuoB, C, D, E, F, and G constitute the peripheral sector of the complex. [4Fe-4S] cluster serves as cofactor.

The protein resides in the cell inner membrane. The catalysed reaction is a quinone + NADH + 5 H(+)(in) = a quinol + NAD(+) + 4 H(+)(out). In terms of biological role, NDH-1 shuttles electrons from NADH, via FMN and iron-sulfur (Fe-S) centers, to quinones in the respiratory chain. Couples the redox reaction to proton translocation (for every two electrons transferred, four hydrogen ions are translocated across the cytoplasmic membrane), and thus conserves the redox energy in a proton gradient. This chain is NADH-quinone oxidoreductase subunit B, found in Novosphingobium aromaticivorans (strain ATCC 700278 / DSM 12444 / CCUG 56034 / CIP 105152 / NBRC 16084 / F199).